The following is a 143-amino-acid chain: Large-conductance mechanosensitive channel (143 aa).

2 helical membrane-spanning segments follow: residues 16 to 36 (VIDL…VTAL) and 84 to 104 (INTV…VKLI).

This sequence belongs to the MscL family. Homopentamer.

It localises to the cell inner membrane. Its function is as follows. Channel that opens in response to stretch forces in the membrane lipid bilayer. May participate in the regulation of osmotic pressure changes within the cell. This chain is Large-conductance mechanosensitive channel, found in Xanthomonas axonopodis pv. citri (strain 306).